Here is a 370-residue protein sequence, read N- to C-terminus: Uroporphyrinogen decarboxylase (370 aa).

Substrate is bound by residues 29–33, Asp-79, Tyr-155, Ser-210, and His-342; that span reads RQAGR.

Belongs to the uroporphyrinogen decarboxylase family. As to quaternary structure, homodimer.

It is found in the cytoplasm. It carries out the reaction uroporphyrinogen III + 4 H(+) = coproporphyrinogen III + 4 CO2. It participates in porphyrin-containing compound metabolism; protoporphyrin-IX biosynthesis; coproporphyrinogen-III from 5-aminolevulinate: step 4/4. Catalyzes the decarboxylation of four acetate groups of uroporphyrinogen-III to yield coproporphyrinogen-III. In Verminephrobacter eiseniae (strain EF01-2), this protein is Uroporphyrinogen decarboxylase.